A 124-amino-acid polypeptide reads, in one-letter code: Large ribosomal subunit protein bL12 (124 aa).

Belongs to the bacterial ribosomal protein bL12 family. In terms of assembly, homodimer. Part of the ribosomal stalk of the 50S ribosomal subunit. Forms a multimeric L10(L12)X complex, where L10 forms an elongated spine to which 2 to 4 L12 dimers bind in a sequential fashion. Binds GTP-bound translation factors.

Its function is as follows. Forms part of the ribosomal stalk which helps the ribosome interact with GTP-bound translation factors. Is thus essential for accurate translation. The polypeptide is Large ribosomal subunit protein bL12 (Cupriavidus taiwanensis (strain DSM 17343 / BCRC 17206 / CCUG 44338 / CIP 107171 / LMG 19424 / R1) (Ralstonia taiwanensis (strain LMG 19424))).